Consider the following 358-residue polypeptide: UDP-N-acetylglucosamine--N-acetylmuramyl-(pentapeptide) pyrophosphoryl-undecaprenol N-acetylglucosamine transferase (358 aa).

UDP-N-acetyl-alpha-D-glucosamine-binding positions include 10 to 12 (TGG), N124, R165, S187, I243, and Q288.

It belongs to the glycosyltransferase 28 family. MurG subfamily.

It is found in the cell inner membrane. The enzyme catalyses di-trans,octa-cis-undecaprenyl diphospho-N-acetyl-alpha-D-muramoyl-L-alanyl-D-glutamyl-meso-2,6-diaminopimeloyl-D-alanyl-D-alanine + UDP-N-acetyl-alpha-D-glucosamine = di-trans,octa-cis-undecaprenyl diphospho-[N-acetyl-alpha-D-glucosaminyl-(1-&gt;4)]-N-acetyl-alpha-D-muramoyl-L-alanyl-D-glutamyl-meso-2,6-diaminopimeloyl-D-alanyl-D-alanine + UDP + H(+). It participates in cell wall biogenesis; peptidoglycan biosynthesis. Its function is as follows. Cell wall formation. Catalyzes the transfer of a GlcNAc subunit on undecaprenyl-pyrophosphoryl-MurNAc-pentapeptide (lipid intermediate I) to form undecaprenyl-pyrophosphoryl-MurNAc-(pentapeptide)GlcNAc (lipid intermediate II). The chain is UDP-N-acetylglucosamine--N-acetylmuramyl-(pentapeptide) pyrophosphoryl-undecaprenol N-acetylglucosamine transferase from Syntrophotalea carbinolica (strain DSM 2380 / NBRC 103641 / GraBd1) (Pelobacter carbinolicus).